We begin with the raw amino-acid sequence, 632 residues long: PAN2-PAN3 deadenylation complex subunit PAN3 (632 aa).

2 disordered regions span residues 1-22 and 99-127; these read MQPG…PHQL and PTFG…PPTL. Residues 107 to 116 are compositionally biased toward basic residues; it reads MNHRASHHHQ. Residues 117-127 show a composition bias toward polar residues; that stretch reads SPQMAQQPPTL. The tract at residues 223–494 is pseudokinase domain; sequence KADSAIIGDI…TINEIMPMIG (272 aa). ATP-binding positions include Arg270, 321–328, and 397–398; these read DYYPLAGT and NK. Positions 495–533 form a coiled coil; that stretch reads GRFFTVMENMQAKTDVLEAELSREMENGRLFRLVAKMNT. The segment at 534–632 is knob domain; it reads VLERVEHGTD…LLGTNMMLHR (99 aa).

It belongs to the protein kinase superfamily. PAN3 family. As to quaternary structure, homodimer. Forms a heterotrimer with a catalytic subunit PAN2 to form the poly(A)-nuclease (PAN) deadenylation complex. Interacts (via PAM-2 motif) with poly(A)-binding protein (via PABC domain), conferring substrate specificity of the enzyme complex. Interacts with the GW182 family protein ain-1. Highly expressed in germ cells.

The protein localises to the cytoplasm. It is found in the P-body. Regulatory subunit of the poly(A)-nuclease (PAN) deadenylation complex, one of two cytoplasmic mRNA deadenylases involved in general and miRNA-mediated mRNA turnover. PAN specifically shortens poly(A) tails of RNA and the activity is stimulated by poly(A)-binding protein (PABP). PAN deadenylation is followed by rapid degradation of the shortened mRNA tails by the CCR4-NOT complex. Deadenylated mRNAs are then degraded by two alternative mechanisms, namely exosome-mediated 3'-5' exonucleolytic degradation, or deadenylation-dependent mRNA decaping and subsequent 5'-3' exonucleolytic degradation by XRN1. PAN3 acts as a positive regulator for PAN activity, recruiting the catalytic subunit PAN2 to mRNA via its interaction with RNA and PABP, and to miRNA targets via its interaction with GW182 family proteins. Within the PAN complex, may positively regulate fertility. This is PAN2-PAN3 deadenylation complex subunit PAN3 from Caenorhabditis elegans.